The primary structure comprises 494 residues: MVLATNSDSDEHLHSTFASRYVRAVVPRFKMPDHCMPKDAAYQVINDELMLDGNPRLNLASFVTTWMEPECDKLIMDSVNKNYVDMDEYPVTTELQNRCVNMIANLFHAPVGEDEAAIGCGTVGSSEAIMLAGLAFKRKWQHRRKAQGLPIDKPNIVTGANVQVCWEKFARYFEVELKEVKLSEDYYVMDPAKAVEMVDENTICVAAILGSTLTGEFEDVKQLNDLLAEKNAETGWETPIHVDAASGGFIAPFLYPDLEWDFRLPWVKSINVSGHKYGLVYAGVGWVVWRTKDDLPEELVFHINYLGADQPTFTLNFSKGSSQIIAQYYQFIRLGFEGYKNIMENCMDNARRLREGIEMTGKFNIVSKDIGVPLVAFSLKDSSKHTVFEIAESLRKFGWIIPAYTMPADAQHIAVLRVVIREDFSRGLADRLITHIIQVLKEIEGLPSRIAHLAAAAAVSGDDEEVKVKTAKMSLEDITKYWKRLVEHKRNIVC.

N6-(pyridoxal phosphate)lysine is present on K276.

This sequence belongs to the group II decarboxylase family. In terms of assembly, homohexamer. Interacts with calmodulin. The cofactor is pyridoxal 5'-phosphate. Expressed in flowers.

The enzyme catalyses L-glutamate + H(+) = 4-aminobutanoate + CO2. Functionally, catalyzes the production of GABA. The calmodulin-binding is calcium-dependent and it is proposed that this may, directly or indirectly, form a calcium regulated control of GABA biosynthesis. In Arabidopsis thaliana (Mouse-ear cress), this protein is Glutamate decarboxylase 5 (GAD5).